Consider the following 780-residue polypeptide: Pendrin (780 aa).

The Cytoplasmic segment spans residues 1 to 87; sequence MAARDRRSEP…YRVKEWLLSD (87 aa). Residues 88-108 traverse the membrane as a helical segment; it reads IISGVSTGLVGTLQGMAYALL. Position 109 (Ala-109) is a topological domain, extracellular. A helical transmembrane segment spans residues 110-130; that stretch reads AVPVQYGLYSAFFPILTYFVF. The Cytoplasmic portion of the chain corresponds to 131–135; that stretch reads GTSRH. A helical transmembrane segment spans residues 136 to 156; the sequence is ISVGPFPVVSLMVGSVVLSMA. The Extracellular portion of the chain corresponds to 157–191; it reads PDDHFLVPSGNGSTLNTTTLDTGTRDAARVLLAST. A helical transmembrane segment spans residues 192 to 212; the sequence is LTLLVGIIQLVFGGLQIGFIV. The Cytoplasmic segment spans residues 213 to 218; the sequence is RYLADP. Residues 219–239 form a helical membrane-spanning segment; the sequence is LVGGFTTAAAFQVLVSQLKIV. Residues 240 to 263 lie on the Extracellular side of the membrane; sequence LNVSTKNYNGVLSIIYTLIEIFQN. Residues 264-284 form a helical membrane-spanning segment; the sequence is IGDTNIADFIAGLLTIIVCMA. At 285–295 the chain is on the cytoplasmic side; it reads VKELNDRFKHK. A helical transmembrane segment spans residues 296–316; that stretch reads IPVPIPIEVIVTIIATAISYG. The Extracellular segment spans residues 317-344; that stretch reads ANLEANYNAGIVKSIPSGFLPPVLPSVG. A helical membrane pass occupies residues 345–365; the sequence is LFSDMLAASFSIAVVAYAIAV. The Cytoplasmic segment spans residues 366–384; sequence SVGKVYATKHDYIIDGNQE. A helical membrane pass occupies residues 385–405; the sequence is FIAFGISNVFSGFFSCFVATT. Residues 406-421 lie on the Extracellular side of the membrane; that stretch reads ALSRTAVQESTGGKTQ. The helical transmembrane segment at 422 to 442 threads the bilayer; sequence VAGLISAVIVMVAIVALGKLL. Residues 443 to 448 lie on the Cytoplasmic side of the membrane; the sequence is EPLQKS. The chain crosses the membrane as a helical span at residues 449–469; sequence VLAAVVIANLKGMFMQVCDVP. Over 470–486 the chain is Extracellular; it reads RLWKQNKTDAVIWVFTC. Residues 487 to 507 form a helical membrane-spanning segment; the sequence is IMSIILGLDLGLLAGLLFGLL. Over 508–780 the chain is Cytoplasmic; the sequence is TVVLRVQFPS…QDEAMRRLAS (273 aa). Residues 535 to 729 enclose the STAS domain; the sequence is HYKNLEEPEG…LTVHDAILYL (195 aa).

The protein belongs to the SLC26A/SulP transporter (TC 2.A.53) family. In terms of tissue distribution, highly expressed in the kidney (at protein level).

The protein resides in the cell membrane. The protein localises to the apical cell membrane. It carries out the reaction chloride(in) = chloride(out). The catalysed reaction is iodide(out) = iodide(in). It catalyses the reaction hydrogencarbonate(in) + chloride(out) = hydrogencarbonate(out) + chloride(in). The enzyme catalyses iodide(in) + hydrogencarbonate(out) = iodide(out) + hydrogencarbonate(in). It carries out the reaction iodide(in) + chloride(out) = iodide(out) + chloride(in). The catalysed reaction is formate(in) + chloride(out) = formate(out) + chloride(in). Its function is as follows. Sodium-independent transporter of chloride and iodide. Mediates electroneutral chloride-bicarbonate and chloride-formate exchange with 1:1 stoichiometry. Mediates electroneutral iodide-chloride and iodide-bicarbonate exchange. The sequence is that of Pendrin (Slc26a4) from Rattus norvegicus (Rat).